The primary structure comprises 152 residues: Transcriptional regulator MraZ (152 aa).

SpoVT-AbrB domains are found at residues 5-52 (ASAI…PLKE) and 81-124 (ATEC…SDAE).

This sequence belongs to the MraZ family. As to quaternary structure, forms oligomers.

The protein resides in the cytoplasm. It localises to the nucleoid. This Pasteurella multocida (strain Pm70) protein is Transcriptional regulator MraZ.